Reading from the N-terminus, the 177-residue chain is Nucleoside triphosphate/diphosphate phosphatase (177 aa).

The Proton donor role is filled by Arg23. Residues Asn87, Asp103, Asp105, Asp107, Asp120, and Glu123 each coordinate Mg(2+).

The protein belongs to the Ntdp family. Requires Mg(2+) as cofactor.

The catalysed reaction is a ribonucleoside 5'-triphosphate + H2O = a ribonucleoside 5'-diphosphate + phosphate + H(+). The enzyme catalyses a ribonucleoside 5'-diphosphate + H2O = a ribonucleoside 5'-phosphate + phosphate + H(+). Its function is as follows. Has nucleoside phosphatase activity towards nucleoside triphosphates and nucleoside diphosphates. The protein is Nucleoside triphosphate/diphosphate phosphatase of Streptococcus uberis (strain ATCC BAA-854 / 0140J).